The sequence spans 80 residues: MNKNPIYRSEEEAKNIACGNVAAELDENSQALDAINGAGWKQTIVCTIAQGTVGCLVSYGLGNGGYCCTYTVECSKTCNK.

The propeptide at 1 to 38 (MNKNPIYRSEEEAKNIACGNVAAELDENSQALDAINGA) is cleaved by FlvT. A 2,3-didehydrobutyrine; by FlvM1 mark is found at T43 and T47. The segment at residues 52–55 (TVGC) is a cross-link (beta-methyllanthionine (Thr-Cys); by FlvM1). Positions 58-68 (SYGLGNGGYCC) form a cross-link, lanthionine (Ser-Cys); by FlvM1. 2 cross-links (beta-methyllanthionine (Thr-Cys); by FlvM1) span residues 69-74 (TYTVEC) and 71-78 (TVECSKTC).

Post-translationally, the lanthionine formed by Ser-58 and Cys-68 forms a putative lipid II binding motif. In terms of processing, maturation of FlvA1 peptides involves the enzymatic conversion of Thr, and Ser into dehydrated AA and the formation of thioether bonds with cysteines. Modifications are processed by the flavecin synthetase FlvM1. This is followed by membrane translocation and cleavage of the modified precursor. Contains DL-lanthionine and DL-beta-methyllanthionine, when coepressed in E.coli with the flavecin synthetase FlvM1.

It localises to the secreted. Lanthionine-containing peptide antibiotic (lantibiotic) only active on Gram-positive bacteria in synergy with Flvbeta peptides, which are encoded by the same operon than Flvalpha.a. Shows antibacterial activity in synergy with Flvbeta.b, Flvbeta.c, Flvbeta.e and Flvbeta.g. Does not show antibacterial activity when tested with Flvbeta.a, Flvbeta.d, Flvbeta.f and Flvbeta.h. The bactericidal activity of lantibiotics is based on depolarization of energized bacterial cytoplasmic membranes, initiated by the formation of aqueous transmembrane pores. This chain is Lantibiotic Flvalpha.b, found in Ruminococcus flavefaciens.